The following is a 513-amino-acid chain: GMP synthase [glutamine-hydrolyzing] (513 aa).

The Glutamine amidotransferase type-1 domain maps to 9 to 198 (LILVLDFGSQ…IREICKCTGE (190 aa)). C86 (nucleophile) is an active-site residue. Residues H172 and E174 contribute to the active site. Residues 199 to 388 (WTMENFIEIE…LGIPEHLVWR (190 aa)) enclose the GMPS ATP-PPase domain. ATP is bound at residue 226-232 (SGGVDSS).

As to quaternary structure, homodimer.

The catalysed reaction is XMP + L-glutamine + ATP + H2O = GMP + L-glutamate + AMP + diphosphate + 2 H(+). The protein operates within purine metabolism; GMP biosynthesis; GMP from XMP (L-Gln route): step 1/1. In terms of biological role, catalyzes the synthesis of GMP from XMP. The polypeptide is GMP synthase [glutamine-hydrolyzing] (Macrococcus caseolyticus (strain JCSC5402) (Macrococcoides caseolyticum)).